The chain runs to 419 residues: eIF5-mimic protein 2 (419 aa).

An N-acetylmethionine modification is found at methionine 1. Over residues 1–15 (MNNQKQQKPTLSGQR) the composition is skewed to polar residues. The interval 1-26 (MNNQKQQKPTLSGQRFKTRKRDEKER) is disordered. A Phosphoserine modification is found at serine 12. Positions 247–414 (NQQTIGARKE…KNAEEESESE (168 aa)) constitute a W2 domain. Lysine 368 is covalently cross-linked (Glycyl lysine isopeptide (Lys-Gly) (interchain with G-Cter in SUMO2)). A phosphoserine mark is found at serine 411 and serine 413.

The protein belongs to the BZW family.

Translation initiation regulator which represses repeat-associated non-AUG (RAN) initiated translation probably by acting as a competitive inhibitor of eukaryotic translation initiation factor 5 (EIF5) function. Enhances histone H4 gene transcription but does not seem to bind DNA directly. This is eIF5-mimic protein 2 (BZW1) from Homo sapiens (Human).